A 109-amino-acid polypeptide reads, in one-letter code: Large ribosomal subunit protein P1A (109 aa).

Over residues 69–84 (APVAGGAAAPAAADGE) the composition is skewed to low complexity. Positions 69–109 (APVAGGAAAPAAADGEAPAEEKEEAKEEEESDEDMGFGLFD) are disordered. Over residues 94–103 (KEEEESDEDM) the composition is skewed to acidic residues.

The protein belongs to the eukaryotic ribosomal protein P1/P2 family. Component of the large ribosomal subunit (LSU). Mature yeast ribosomes consist of a small (40S) and a large (60S) subunit. The 40S small subunit contains 1 molecule of ribosomal RNA (18S rRNA) and at least 33 different proteins. The large 60S subunit contains 3 rRNA molecules (25S, 5.8S and 5S rRNA) and at least 46 different proteins. The acidic ribosomal P-proteins form the stalk structure of the 60S subunit. They are organized as a pentameric complex in which uL10/P0 interacts with 2 heterodimers of P1 and P2 proteins.

The protein resides in the cytoplasm. Component of the ribosome, a large ribonucleoprotein complex responsible for the synthesis of proteins in the cell. The small ribosomal subunit (SSU) binds messenger RNAs (mRNAs) and translates the encoded message by selecting cognate aminoacyl-transfer RNA (tRNA) molecules. The large subunit (LSU) contains the ribosomal catalytic site termed the peptidyl transferase center (PTC), which catalyzes the formation of peptide bonds, thereby polymerizing the amino acids delivered by tRNAs into a polypeptide chain. The nascent polypeptides leave the ribosome through a tunnel in the LSU and interact with protein factors that function in enzymatic processing, targeting, and the membrane insertion of nascent chains at the exit of the ribosomal tunnel. The sequence is that of Large ribosomal subunit protein P1A (rpp101) from Schizosaccharomyces pombe (strain 972 / ATCC 24843) (Fission yeast).